A 197-amino-acid polypeptide reads, in one-letter code: Neurturin (197 aa).

An N-terminal signal peptide occupies residues 1–19 (MQRWKAAALASVLCSSVLS). Positions 20–95 (IWMCREGLLL…RAGPRRRRAR (76 aa)) are excised as a propeptide. The segment at 74–93 (TPWAGRPPGPRRRAGPRRRR) is disordered. Residues 82–93 (GPRRRAGPRRRR) show a composition bias toward basic residues. 3 disulfide bridges follow: Cys-103–Cys-165, Cys-130–Cys-194, and Cys-134–Cys-196. The heparan sulfate group site is built by Arg-149, Arg-158, Arg-160, and Gln-162.

This sequence belongs to the TGF-beta family. GDNF subfamily. Homodimer; disulfide-linked. Interacts with GFRA2 coreceptor and RET: forms a 2:2:2 ternary complex composed of NRTN ligand, GFRA2 and RET receptor. Also forms a 4:4:4 tetrameric complex composed of 4 copies of NRTN ligand, GFRA2 and RET receptor, which prevents endocytosis of RET.

It localises to the secreted. Its function is as follows. Growth factor that supports the survival of sympathetic neurons in culture. May regulate the development and maintenance of the CNS. Involved in the development of the neural crest. Might control the size of non-neuronal cell population such as haemopoietic cells. Acts by binding to its coreceptor, GFRA2, leading to autophosphorylation and activation of the RET receptor. Heparan sulfate-binding is required for signaling. This is Neurturin from Homo sapiens (Human).